The following is a 247-amino-acid chain: 6-carboxyhexanoate--CoA ligase (247 aa).

Belongs to the BioW family. Homodimer. Mg(2+) serves as cofactor.

It carries out the reaction heptanedioate + ATP + CoA = 6-carboxyhexanoyl-CoA + AMP + diphosphate. It participates in metabolic intermediate metabolism; pimeloyl-CoA biosynthesis; pimeloyl-CoA from pimelate: step 1/1. Functionally, catalyzes the transformation of pimelate into pimeloyl-CoA with concomitant hydrolysis of ATP to AMP. In Corynebacterium diphtheriae (strain ATCC 700971 / NCTC 13129 / Biotype gravis), this protein is 6-carboxyhexanoate--CoA ligase.